A 159-amino-acid chain; its full sequence is Transcriptional repressor NrdR (159 aa).

Over residues 1 to 11 (MQCPTCQNTDS) the composition is skewed to polar residues. The segment at 1 to 21 (MQCPTCQNTDSRVLESRSADS) is disordered. Residues 3-34 (CPTCQNTDSRVLESRSADSGKSVRRRRECLNC) fold into a zinc finger. The region spanning 49–139 (VSVLKKDGSR…VYRKFNGVKD (91 aa)) is the ATP-cone domain.

The protein belongs to the NrdR family. The cofactor is Zn(2+).

Functionally, negatively regulates transcription of bacterial ribonucleotide reductase nrd genes and operons by binding to NrdR-boxes. The protein is Transcriptional repressor NrdR of Prochlorococcus marinus (strain MIT 9301).